We begin with the raw amino-acid sequence, 172 residues long: SsrA-binding protein (172 aa).

The protein belongs to the SmpB family.

The protein localises to the cytoplasm. In terms of biological role, required for rescue of stalled ribosomes mediated by trans-translation. Binds to transfer-messenger RNA (tmRNA), required for stable association of tmRNA with ribosomes. tmRNA and SmpB together mimic tRNA shape, replacing the anticodon stem-loop with SmpB. tmRNA is encoded by the ssrA gene; the 2 termini fold to resemble tRNA(Ala) and it encodes a 'tag peptide', a short internal open reading frame. During trans-translation Ala-aminoacylated tmRNA acts like a tRNA, entering the A-site of stalled ribosomes, displacing the stalled mRNA. The ribosome then switches to translate the ORF on the tmRNA; the nascent peptide is terminated with the 'tag peptide' encoded by the tmRNA and targeted for degradation. The ribosome is freed to recommence translation, which seems to be the essential function of trans-translation. This chain is SsrA-binding protein, found in Dehalococcoides mccartyi (strain ATCC BAA-2266 / KCTC 15142 / 195) (Dehalococcoides ethenogenes (strain 195)).